A 278-amino-acid polypeptide reads, in one-letter code: MKLQFTKMHGLGNDFIVINAINQPASLTFLDPATIRRLADRHFGIGFDQLLIVEQAREGGDFRYRIFNADGGEVEQCGNGARCFARFVRDYNLTDKNTIRVETARGIITPTIENNGEVSVNMGVPQFEPAEIPFQAAQRMPVYPLQIGDKTIEISAVSIGNPHAVQIIPDIDLAPVTTEGPKIEAHPLFPERVNAGFMQIIDRAHIRLRVFERGTGETLACGTGACAAVVCGILRGLLDTTVQVAMHGGNLQIRWDGKDKPVWMTGPAITVFEGTIDL.

Residues Asn-13, Gln-49, and Asn-68 each coordinate substrate. Cys-77 (proton donor) is an active-site residue. Substrate contacts are provided by residues 78 to 79 (GN), Asn-161, Asn-194, and 212 to 213 (ER). Catalysis depends on Cys-221, which acts as the Proton acceptor. 222–223 (GT) is a substrate binding site.

It belongs to the diaminopimelate epimerase family. As to quaternary structure, homodimer.

The protein localises to the cytoplasm. It carries out the reaction (2S,6S)-2,6-diaminopimelate = meso-2,6-diaminopimelate. It functions in the pathway amino-acid biosynthesis; L-lysine biosynthesis via DAP pathway; DL-2,6-diaminopimelate from LL-2,6-diaminopimelate: step 1/1. Functionally, catalyzes the stereoinversion of LL-2,6-diaminopimelate (L,L-DAP) to meso-diaminopimelate (meso-DAP), a precursor of L-lysine and an essential component of the bacterial peptidoglycan. The sequence is that of Diaminopimelate epimerase from Nitrosomonas eutropha (strain DSM 101675 / C91 / Nm57).